The chain runs to 184 residues: Intraflagellar transport protein 22 homolog (184 aa).

Residues 10 to 17, 62 to 66, and 122 to 125 contribute to the GTP site; these read GPTESGKT, DCGGD, and KKPG.

The protein belongs to the small GTPase superfamily. Rab family.

In Xenopus tropicalis (Western clawed frog), this protein is Intraflagellar transport protein 22 homolog (ift22).